The sequence spans 31 residues: Potassium channel toxin alpha-KTx 5.5 (31 aa).

3 cysteine pairs are disulfide-bonded: cysteine 3–cysteine 21, cysteine 8–cysteine 26, and cysteine 12–cysteine 28. The segment at 6 to 9 (RRCE) is [R/K]XCQ motif. Histidine 31 carries the post-translational modification Histidine amide.

In terms of tissue distribution, expressed by the venom gland.

It localises to the secreted. Blocks small conductance calcium-activated potassium channels. The protein is Potassium channel toxin alpha-KTx 5.5 of Hottentotta tamulus (Eastern Indian scorpion).